The primary structure comprises 477 residues: MSSGRIVQIIGAVLDVEFNRNEVPKIFDALLVDGTETTLEVQQQLGDGIVRTIAMGSTEGLKRNLPVTNTGGPISVPVGIGTLGRIMDVLGRPIDEEGPVQADERWSIHREAPSYAEQSNSTELLETGIKVIDLLCPFAKGGKVGLFGGAGVGKTVNMMELINNIALKHEGLSVFAGVGERTREGNDFYHEMQEAGVVNTEDFSKSKVAMVYGQMNEPPGNRLRVALSGLTMAEYFRDTKDPATGKGRDVLLFVDNIYRYTLAGTEVSALLGRMPSAVGYQPTLAEEMGMLQERITSTQSGSITSVQAVYVPADDLTDPSPATTFAHLDATVVLSRDIASQGIYPAVDPLDSTSRQLDPLVIGEEHYNVARGVQEVLQRYKELKDIIAILGMDELSEEDKLVVYRARKIQRFLSQPFHVAEVFTGAPGKYVPLRDTIASFKAIIAGEYDSLPEQAFYMAGGIDEVVAKAEKMKSSAA.

148-155 (GGAGVGKT) is a binding site for ATP.

It belongs to the ATPase alpha/beta chains family. In terms of assembly, F-type ATPases have 2 components, CF(1) - the catalytic core - and CF(0) - the membrane proton channel. CF(1) has five subunits: alpha(3), beta(3), gamma(1), delta(1), epsilon(1). CF(0) has three main subunits: a(1), b(2) and c(9-12). The alpha and beta chains form an alternating ring which encloses part of the gamma chain. CF(1) is attached to CF(0) by a central stalk formed by the gamma and epsilon chains, while a peripheral stalk is formed by the delta and b chains.

Its subcellular location is the cell inner membrane. The enzyme catalyses ATP + H2O + 4 H(+)(in) = ADP + phosphate + 5 H(+)(out). Its function is as follows. Produces ATP from ADP in the presence of a proton gradient across the membrane. The catalytic sites are hosted primarily by the beta subunits. This is ATP synthase subunit beta from Psychrobacter cryohalolentis (strain ATCC BAA-1226 / DSM 17306 / VKM B-2378 / K5).